A 114-amino-acid polypeptide reads, in one-letter code: Beta-microseminoprotein E1 (114 aa).

A signal peptide spans 1 to 20; it reads MNVLLGGLVIFATFVTLCNG. 5 disulfides stabilise this stretch: Cys-22-Cys-70, Cys-38-Cys-62, Cys-57-Cys-93, Cys-60-Cys-69, and Cys-84-Cys-107.

Belongs to the beta-microseminoprotein family.

Its subcellular location is the secreted. The polypeptide is Beta-microseminoprotein E1 (MSPE) (Saguinus oedipus (Cotton-top tamarin)).